Reading from the N-terminus, the 151-residue chain is Mitochondrial intermembrane space import and assembly protein 40 homolog (151 aa).

Residues 1 to 35 (MGQGLSQPAQAVEEPSPPAVEAAPSSSPSPAPAPS) form a disordered region. The segment covering 7–26 (QPAQAVEEPSPPAVEAAPSS) has biased composition (low complexity). 3 disulfide bridges follow: C65-C67, C76-C109, and C86-C99. Positions 73–117 (NGPCGSQFVDAFSCFLKSTEEEKGSDCVKPFIALQDCIKINPEAF) constitute a CHCH domain. 2 consecutive short sequence motifs (cx9C motif) follow at residues 76-86 (CGSQFVDAFSC) and 99-109 (CVKPFIALQDC). The disordered stretch occupies residues 123–151 (EEEENDEEAEKSNLKVRAPAWSRESKPKL).

It localises to the mitochondrion intermembrane space. Its subcellular location is the peroxisome matrix. In terms of biological role, required for the import and folding of small cysteine-containing proteins in the mitochondrial intermembrane space. The sequence is that of Mitochondrial intermembrane space import and assembly protein 40 homolog from Oryza sativa subsp. japonica (Rice).